The following is a 594-amino-acid chain: UvrABC system protein C (594 aa).

The 78-residue stretch at 17–94 (LEPGCYLMKD…IKQYQPRYNI (78 aa)) folds into the GIY-YIG domain. The UVR domain maps to 199-234 (KTILHHLEDRMNKASEQLDFEQAKEYRDMIQHIHNL).

It belongs to the UvrC family. As to quaternary structure, interacts with UvrB in an incision complex.

The protein resides in the cytoplasm. Functionally, the UvrABC repair system catalyzes the recognition and processing of DNA lesions. UvrC both incises the 5' and 3' sides of the lesion. The N-terminal half is responsible for the 3' incision and the C-terminal half is responsible for the 5' incision. This Staphylococcus epidermidis (strain ATCC 12228 / FDA PCI 1200) protein is UvrABC system protein C.